A 783-amino-acid polypeptide reads, in one-letter code: Cation/H(+) antiporter 10 (783 aa).

The next 12 membrane-spanning stretches (helical) occupy residues 31–51 (VVFG…FFCI), 61–81 (IGIS…PQLF), 100–120 (IAAL…LMTV), 135–155 (VVIG…QNFF), 175–195 (AIVI…LLEL), 206–226 (ALSA…VASI), 244–264 (AVII…QWVI), 276–295 (MYIH…FVFF), 300–322 (ILGP…ALEA), 356–376 (IFFN…ACLA), 389–409 (LAVS…YEAV), and 418–438 (ATYS…PTVL).

It belongs to the monovalent cation:proton antiporter 2 (CPA2) transporter (TC 2.A.37) family. CHX (TC 2.A.37.4) subfamily. In terms of tissue distribution, specifically expressed in pollen.

Its subcellular location is the membrane. Functionally, may operate as a cation/H(+) antiporter. The chain is Cation/H(+) antiporter 10 (CHX10) from Arabidopsis thaliana (Mouse-ear cress).